Consider the following 293-residue polypeptide: C-type lectin domain family 4 member G (293 aa).

Residues 1-31 (MDTTRYSKWGGSSEEVPGGPWGRWVHWSRRP) lie on the Cytoplasmic side of the membrane. Residue S12 is modified to Phosphoserine. Residues 32–52 (LFLALAVLVTTVLWAVILSIL) traverse the membrane as a helical; Signal-anchor for type II membrane protein segment. Residues 53-293 (LSKASTERAA…GWICEKRHNC (241 aa)) are Extracellular-facing. N73 is a glycosylation site (N-linked (GlcNAc...) asparagine). Residues 96-136 (SGTQAQLQTTRAELGEAQAKLMEQESALRELRERVTQGLAE) are a coiled coil. The N-linked (GlcNAc...) asparagine glycan is linked to N159. A C-type lectin domain is found at 172–287 (FEGSCYFFSV…CDSEKDGWIC (116 aa)). C264 and C278 are joined by a disulfide.

As to quaternary structure, (Microbial infection) Interacts with Japanese encephalitis virus envelope protein E. In terms of assembly, (Microbial infection) Interacts with ebolavirus glycoprotein. (Microbial infection) Interacts with SARS-CoV spike glycoprotein. As to quaternary structure, (Microbial infection) Interacts with lassa virus and Lymphocytic choriomeningitis virus glycoprotein. Expressed exclusively in fetal and adult liver and in lymph nodes. Specifically expressed by endothelial cells lining lymph node and liver sinuses (at protein level).

Its subcellular location is the cell membrane. In terms of biological role, binds mannose, N-acetylglucosamine (GlcNAc) and fucose, but not galactose, in a Ca(2+)-dependent manner, in vitro. (Microbial infection) Acts as a receptor for Japanese encephalitis virus. Functionally, (Microbial infection) Acts as a receptor for Ebolavirus. Its function is as follows. (Microbial infection) Acts as a receptor for SARS-CoV. In terms of biological role, (Microbial infection) Acts as a receptor for Lassa virus and Lymphocytic choriomeningitis virus glycoprotein. The chain is C-type lectin domain family 4 member G (CLEC4G) from Homo sapiens (Human).